The following is a 584-amino-acid chain: Interferon regulatory factor 2-binding protein 1 (584 aa).

The segment at 60 to 127 (VLPEGRSPGP…SGRLPLPSPA (68 aa)) is disordered. Phosphoserine occurs at positions 66 and 125. At Arg-177 the chain carries Omega-N-methylarginine. Phosphoserine is present on Ser-186. A coiled-coil region spans residues 197–217 (EKEKQQRNADCLAELNEAMRG). Lys-227 is covalently cross-linked (Glycyl lysine isopeptide (Lys-Gly) (interchain with G-Cter in SUMO2)). The disordered stretch occupies residues 346–420 (PAEALPQQYP…PYSAETPGVP (75 aa)). The segment covering 354 to 369 (YPEPAPAALCGPPPRA) has biased composition (pro residues). A phosphoserine mark is found at Ser-371, Ser-384, Ser-421, and Ser-436. Positions 433–495 (LGHSPKDPGG…VSGGGSGTGA (63 aa)) are disordered. Residue Lys-438 forms a Glycyl lysine isopeptide (Lys-Gly) (interchain with G-Cter in SUMO2) linkage. Over residues 449–463 (AGGASPAASSTAQPP) the composition is skewed to low complexity. Phosphoserine is present on residues Ser-453 and Ser-457. The segment at 503–550 (CTLCRERLEDTHFVQCPSVPGHKFCFPCSREFIKAQGPAGEVYCPSGD) adopts an RING-type; degenerate zinc-finger fold. The cys-rich stretch occupies residues 503-550 (CTLCRERLEDTHFVQCPSVPGHKFCFPCSREFIKAQGPAGEVYCPSGD).

The protein belongs to the IRF2BP family. Interacts with IRF2. Part of a corepressor complex containing IRF2 and IRF2BP2. Interacts with JDP2.

Its subcellular location is the nucleus. It carries out the reaction S-ubiquitinyl-[E2 ubiquitin-conjugating enzyme]-L-cysteine + [acceptor protein]-L-lysine = [E2 ubiquitin-conjugating enzyme]-L-cysteine + N(6)-ubiquitinyl-[acceptor protein]-L-lysine.. Functionally, acts as a transcriptional corepressor in a IRF2-dependent manner; this repression is not mediated by histone deacetylase activities. May act as an E3 ligase towards JDP2, enhancing its polyubiquitination. Represses ATF2-dependent transcriptional activation. In Homo sapiens (Human), this protein is Interferon regulatory factor 2-binding protein 1 (IRF2BP1).